A 750-amino-acid polypeptide reads, in one-letter code: Photosystem I P700 chlorophyll a apoprotein A1 (750 aa).

The next 8 membrane-spanning stretches (helical) occupy residues 70–93 (IFSA…FHGA), 156–179 (LYCT…FHYH), 195–219 (LNHH…HVSL), 291–309 (IAHH…GHMY), 346–369 (WHAQ…HHMY), 385–411 (LSLF…IFMV), 433–455 (AIIS…LYIH), and 531–549 (FLVH…LILL). C573 and C582 together coordinate [4Fe-4S] cluster. Helical transmembrane passes span 589-610 (HVFL…HFSW) and 664-686 (LSAY…MFLF). H675 is a chlorophyll a' binding site. M683 and Y691 together coordinate chlorophyll a. A phylloquinone-binding site is contributed by W692. Residues 724–744 (AVGVTHYLLGGIATTWAFFLA) traverse the membrane as a helical segment.

The protein belongs to the PsaA/PsaB family. As to quaternary structure, the PsaA/B heterodimer binds the P700 chlorophyll special pair and subsequent electron acceptors. PSI consists of a core antenna complex that captures photons, and an electron transfer chain that converts photonic excitation into a charge separation. The eukaryotic PSI reaction center is composed of at least 11 subunits. P700 is a chlorophyll a/chlorophyll a' dimer, A0 is one or more chlorophyll a, A1 is one or both phylloquinones and FX is a shared 4Fe-4S iron-sulfur center. is required as a cofactor.

The protein localises to the plastid. It localises to the chloroplast thylakoid membrane. The catalysed reaction is reduced [plastocyanin] + hnu + oxidized [2Fe-2S]-[ferredoxin] = oxidized [plastocyanin] + reduced [2Fe-2S]-[ferredoxin]. In terms of biological role, psaA and PsaB bind P700, the primary electron donor of photosystem I (PSI), as well as the electron acceptors A0, A1 and FX. PSI is a plastocyanin-ferredoxin oxidoreductase, converting photonic excitation into a charge separation, which transfers an electron from the donor P700 chlorophyll pair to the spectroscopically characterized acceptors A0, A1, FX, FA and FB in turn. Oxidized P700 is reduced on the lumenal side of the thylakoid membrane by plastocyanin. This is Photosystem I P700 chlorophyll a apoprotein A1 from Gossypium hirsutum (Upland cotton).